The following is a 116-amino-acid chain: U16-barytoxin-Tl1b (116 aa).

A signal peptide spans 1-20 (MKTIIVFLSLLVLATKFGDA). Positions 21–74 (KEGVNQKQKKEVTQNEFREEYLNEMAAMSLVQQLEAIERALFENEAGRNSRQKR) are excised as a propeptide. 3 disulfides stabilise this stretch: Cys-75/Cys-90, Cys-82/Cys-95, and Cys-89/Cys-110.

It belongs to the neurotoxin 14 (magi-1) family. 06 (ICK-Trit) subfamily. Expressed by the venom gland.

Its subcellular location is the secreted. In terms of biological role, ion channel inhibitor. This chain is U16-barytoxin-Tl1b, found in Trittame loki (Brush-footed trapdoor spider).